The chain runs to 405 residues: Eukaryotic initiation factor 4A (405 aa).

A Q motif motif is present at residues 31-59 (ECFEALNLEGDLLRGIFAYGFEKPSAIQQ). The region spanning 62–232 (IKPILDGYDT…TQFMRDPKRI (171 aa)) is the Helicase ATP-binding domain. An ATP-binding site is contributed by 75–82 (AQSGTGKT). Positions 180-183 (DEAD) match the DEAD box motif. Residues 243-404 (GIRQFYVGVE…EMPMGITDIL (162 aa)) form the Helicase C-terminal domain.

It belongs to the DEAD box helicase family. eIF4A subfamily. EIF4F is a multi-subunit complex, the composition of which varies with external and internal environmental conditions. It is composed of at least EIF4A, EIF4E and EIF4G.

The catalysed reaction is ATP + H2O = ADP + phosphate + H(+). ATP-dependent RNA helicase which is a subunit of the eIF4F complex involved in cap recognition and is required for mRNA binding to ribosome. In the current model of translation initiation, eIF4A unwinds RNA secondary structures in the 5'-UTR of mRNAs which is necessary to allow efficient binding of the small ribosomal subunit, and subsequent scanning for the initiator codon. This chain is Eukaryotic initiation factor 4A (EIF4-A), found in Cryptosporidium parvum.